A 118-amino-acid chain; its full sequence is MSITSLKNQKEFELINKLGKKLHERYFILVIATKLPKIFLESKYNTFLGIKVSRKLSKKAVVRNKIKRRIRHLIRIIVSDSSFKAIKFAMIIIPRKGFEEINFSHLNYELSKVILRNM.

It belongs to the RnpA family. Consists of a catalytic RNA component (M1 or rnpB) and a protein subunit.

The enzyme catalyses Endonucleolytic cleavage of RNA, removing 5'-extranucleotides from tRNA precursor.. RNaseP catalyzes the removal of the 5'-leader sequence from pre-tRNA to produce the mature 5'-terminus. It can also cleave other RNA substrates such as 4.5S RNA. The protein component plays an auxiliary but essential role in vivo by binding to the 5'-leader sequence and broadening the substrate specificity of the ribozyme. The polypeptide is Ribonuclease P protein component (Rickettsia peacockii (strain Rustic)).